The following is a 339-amino-acid chain: Catalase-related peroxidase (339 aa).

Positions 1–31 (MIRIRNRWFRWLAIALASLVASIGIATVGFA) are cleaved as a signal peptide. Residue histidine 58 is part of the active site. Residue tyrosine 328 coordinates heme.

It belongs to the catalase family. Heme is required as a cofactor.

The protein localises to the periplasm. Its function is as follows. Has an organic peroxide-dependent peroxidase activity. In Synechococcus elongatus (strain ATCC 33912 / PCC 7942 / FACHB-805) (Anacystis nidulans R2), this protein is Catalase-related peroxidase (srpA).